The chain runs to 110 residues: Co-chaperonin GroES (110 aa).

Belongs to the GroES chaperonin family. Heptamer of 7 subunits arranged in a ring. Interacts with the chaperonin GroEL.

Its subcellular location is the cytoplasm. In terms of biological role, together with the chaperonin GroEL, plays an essential role in assisting protein folding. The GroEL-GroES system forms a nano-cage that allows encapsulation of the non-native substrate proteins and provides a physical environment optimized to promote and accelerate protein folding. GroES binds to the apical surface of the GroEL ring, thereby capping the opening of the GroEL channel. This Mycoplasma genitalium (strain ATCC 33530 / DSM 19775 / NCTC 10195 / G37) (Mycoplasmoides genitalium) protein is Co-chaperonin GroES.